Consider the following 162-residue polypeptide: Sec-independent protein translocase protein TatB (162 aa).

Residues 1-21 form a helical membrane-spanning segment; the sequence is MFDIGFSELILIFVVGLVVLG. Positions 136–162 are disordered; sequence LTAYYPPDDDLVSPSTTKLEQDKQNVN.

This sequence belongs to the TatB family. As to quaternary structure, the Tat system comprises two distinct complexes: a TatABC complex, containing multiple copies of TatA, TatB and TatC subunits, and a separate TatA complex, containing only TatA subunits. Substrates initially bind to the TatABC complex, which probably triggers association of the separate TatA complex to form the active translocon.

The protein resides in the cell inner membrane. In terms of biological role, part of the twin-arginine translocation (Tat) system that transports large folded proteins containing a characteristic twin-arginine motif in their signal peptide across membranes. Together with TatC, TatB is part of a receptor directly interacting with Tat signal peptides. TatB may form an oligomeric binding site that transiently accommodates folded Tat precursor proteins before their translocation. The protein is Sec-independent protein translocase protein TatB of Haemophilus ducreyi (strain 35000HP / ATCC 700724).